The sequence spans 253 residues: 5'/3'-nucleotidase SurE (253 aa).

A divalent metal cation is bound by residues aspartate 8, aspartate 9, serine 39, and asparagine 92.

Belongs to the SurE nucleotidase family. The cofactor is a divalent metal cation.

The protein localises to the cytoplasm. It catalyses the reaction a ribonucleoside 5'-phosphate + H2O = a ribonucleoside + phosphate. It carries out the reaction a ribonucleoside 3'-phosphate + H2O = a ribonucleoside + phosphate. The catalysed reaction is [phosphate](n) + H2O = [phosphate](n-1) + phosphate + H(+). In terms of biological role, nucleotidase with a broad substrate specificity as it can dephosphorylate various ribo- and deoxyribonucleoside 5'-monophosphates and ribonucleoside 3'-monophosphates with highest affinity to 3'-AMP. Also hydrolyzes polyphosphate (exopolyphosphatase activity) with the preference for short-chain-length substrates (P20-25). Might be involved in the regulation of dNTP and NTP pools, and in the turnover of 3'-mononucleotides produced by numerous intracellular RNases (T1, T2, and F) during the degradation of various RNAs. This Shigella flexneri serotype 5b (strain 8401) protein is 5'/3'-nucleotidase SurE.